The following is a 145-amino-acid chain: Allergen Sin a 1 (145 aa).

The tract at residues 34-62 is disordered; the sequence is SGSGPSWTLDDEFDFEDDMENPQGPQQRP. Residues 40-54 constitute a propeptide that is removed on maturation; that stretch reads WTLDDEFDFEDDMEN. The segment covering 42–53 has biased composition (acidic residues); sequence LDDEFDFEDDME.

Belongs to the 2S seed storage albumins family. In terms of assembly, the protein consists of two chains linked by disulfide bonds.

Functionally, this is a 2S seed storage protein. This is Allergen Sin a 1 from Sinapis alba (White mustard).